Consider the following 450-residue polypeptide: Transcription factor AP-2 gamma (450 aa).

A Glycyl lysine isopeptide (Lys-Gly) (interchain with G-Cter in SUMO) cross-link involves residue Lys10. 2 disordered regions span residues 13-63 and 90-126; these read EDCE…FPPP and LHQP…GLLP. Residues 59 to 64 carry the PPxY motif motif; that stretch reads YFPPPY. The segment covering 95-110 has biased composition (polar residues); sequence PTGSQQQAWPGRQSQE. Ser252 carries the phosphoserine; by PKA modification. Positions 293-424 are H-S-H (helix-span-helix), dimerization; it reads RRKAAHVTLL…YIKEALIVID (132 aa). A disordered region spans residues 431–450; sequence GDQSPADSNKTLEKMEKHRK. Residue Ser434 is modified to Phosphoserine. A compositionally biased stretch (basic and acidic residues) spans 440–450; the sequence is KTLEKMEKHRK.

This sequence belongs to the AP-2 family. Binds DNA as a dimer. Can form homodimers or heterodimers with other AP-2 family members. Interacts with WWOX. Interacts with UBE2I. Interacts with KCTD1; this interaction represses transcription activation. Interacts with CITED2 (via C-terminus); the interaction stimulates TFAP2B-transcriptional activity. Interacts with CITED4. Interacts with MTA1. Post-translationally, sumoylated on Lys-10; which inhibits transcriptional activity.

Its subcellular location is the nucleus. In terms of biological role, sequence-specific DNA-binding transcription factor that interacts with cellular enhancer elements to regulate transcription of selected genes, and which plays a key role in early embryonic development. AP-2 factors bind to the consensus sequence 5'-GCCNNNGGC-3' and activate genes involved in a large spectrum of important biological functions. TFAP2C plays a key role in early embryonic development by regulating both inner cell mass (ICM) and trophectoderm differentiation. At the 8-cell stage, during morula development, controls expression of cell-polarity genes. Upon trophoblast commitment, binds to late trophectoderm genes in blastocysts together with CDX2, and later to extra-embryonic ectoderm genes together with SOX2. Binds to both closed and open chromatin with other transcription factors. Involved in the MTA1-mediated epigenetic regulation of ESR1 expression in breast cancer. This chain is Transcription factor AP-2 gamma (TFAP2C), found in Homo sapiens (Human).